The following is a 516-amino-acid chain: GMP synthase [glutamine-hydrolyzing] (516 aa).

The region spanning 8–198 (KILILDFGSQ…VVNICGCDTL (191 aa)) is the Glutamine amidotransferase type-1 domain. The active-site Nucleophile is the C84. Active-site residues include H172 and E174. The GMPS ATP-PPase domain occupies 199 to 391 (WNIENIIEND…LGLPYNMLYR (193 aa)). ATP is bound at residue 226–232 (SGGVDSS).

As to quaternary structure, homodimer.

The enzyme catalyses XMP + L-glutamine + ATP + H2O = GMP + L-glutamate + AMP + diphosphate + 2 H(+). It participates in purine metabolism; GMP biosynthesis; GMP from XMP (L-Gln route): step 1/1. Its function is as follows. Catalyzes the synthesis of GMP from XMP. In Francisella tularensis subsp. mediasiatica (strain FSC147), this protein is GMP synthase [glutamine-hydrolyzing].